A 334-amino-acid chain; its full sequence is 7,8-didemethyl-8-hydroxy-5-deazariboflavin synthase (334 aa).

A Radical SAM core domain is found at 2-248 (VSYSKNVFVP…PDVPVQVPPN (247 aa)). The [4Fe-4S] cluster site is built by C16, C20, and C23.

This sequence belongs to the radical SAM superfamily. CofG family. In terms of assembly, consists of two subunits, CofG and CofH. The cofactor is [4Fe-4S] cluster.

The enzyme catalyses 5-amino-5-(4-hydroxybenzyl)-6-(D-ribitylimino)-5,6-dihydrouracil + S-adenosyl-L-methionine = 7,8-didemethyl-8-hydroxy-5-deazariboflavin + 5'-deoxyadenosine + L-methionine + NH4(+) + H(+). It functions in the pathway cofactor biosynthesis; coenzyme F0 biosynthesis. Its function is as follows. Catalyzes the radical-mediated synthesis of 7,8-didemethyl-8-hydroxy-5-deazariboflavin from 5-amino-5-(4-hydroxybenzyl)-6-(D-ribitylimino)-5,6-dihydrouracil. The sequence is that of 7,8-didemethyl-8-hydroxy-5-deazariboflavin synthase from Methanopyrus kandleri (strain AV19 / DSM 6324 / JCM 9639 / NBRC 100938).